The primary structure comprises 271 residues: Formamidopyrimidine-DNA glycosylase (271 aa).

P2 (schiff-base intermediate with DNA) is an active-site residue. Residue E3 is the Proton donor of the active site. Catalysis depends on K58, which acts as the Proton donor; for beta-elimination activity. DNA-binding residues include H91, R110, and R152. The FPG-type zinc-finger motif lies at 237–271 (SVYGRNDAPCPGCGAPIRRSRQGGRSTYFCDRCQH). R261 acts as the Proton donor; for delta-elimination activity in catalysis.

The protein belongs to the FPG family. Monomer. Zn(2+) is required as a cofactor.

The enzyme catalyses Hydrolysis of DNA containing ring-opened 7-methylguanine residues, releasing 2,6-diamino-4-hydroxy-5-(N-methyl)formamidopyrimidine.. It catalyses the reaction 2'-deoxyribonucleotide-(2'-deoxyribose 5'-phosphate)-2'-deoxyribonucleotide-DNA = a 3'-end 2'-deoxyribonucleotide-(2,3-dehydro-2,3-deoxyribose 5'-phosphate)-DNA + a 5'-end 5'-phospho-2'-deoxyribonucleoside-DNA + H(+). Its function is as follows. Involved in base excision repair of DNA damaged by oxidation or by mutagenic agents. Acts as a DNA glycosylase that recognizes and removes damaged bases. Has a preference for oxidized purines, such as 7,8-dihydro-8-oxoguanine (8-oxoG). Has AP (apurinic/apyrimidinic) lyase activity and introduces nicks in the DNA strand. Cleaves the DNA backbone by beta-delta elimination to generate a single-strand break at the site of the removed base with both 3'- and 5'-phosphates. The protein is Formamidopyrimidine-DNA glycosylase of Geotalea uraniireducens (strain Rf4) (Geobacter uraniireducens).